The sequence spans 98 residues: UPF0390 protein zgc136864 (98 aa).

The segment covering 1–30 (MAQGKQKFKAQRPGGAKKHQNKPKGLKKGG) has biased composition (basic residues). 2 disordered regions span residues 1–38 (MAQG…PKKA) and 63–98 (TQKA…GPSK). The segment covering 83–98 (KSGTAGAPKPAAGPSK) has biased composition (low complexity).

The protein belongs to the UPF0390 family.

In Danio rerio (Zebrafish), this protein is UPF0390 protein zgc136864.